The following is a 205-amino-acid chain: Interleukin-6 (205 aa).

An N-terminal signal peptide occupies residues 1-21 (RFTSAFSLGLLLVTATAFPTP). Cysteines 64 and 70 form a disulfide. Serine 73 is modified (phosphoserine). Cysteine 93 and cysteine 103 are disulfide-bonded. A glycan (N-linked (GlcNAc...) asparagine) is linked at asparagine 164.

It belongs to the IL-6 superfamily. In terms of assembly, component of a hexamer of two molecules each of IL6, IL6R and IL6ST; first binds to IL6R to associate with the signaling subunit IL6ST. Interacts with IL6R (via the N-terminal ectodomain); this interaction may be affected by IL6R-binding with SORL1, hence decreasing IL6 cis signaling. Interacts with SORL1 (via the N-terminal ectodomain); this interaction leads to IL6 internalization and lysosomal degradation. May form a trimeric complex with the soluble SORL1 ectodomain and soluble IL6R receptor; this interaction might stabilize circulating IL6, hence promoting IL6 trans signaling.

Its subcellular location is the secreted. Its function is as follows. Cytokine with a wide variety of biological functions in immunity, tissue regeneration, and metabolism. Binds to IL6R, then the complex associates to the signaling subunit IL6ST/gp130 to trigger the intracellular IL6-signaling pathway. The interaction with the membrane-bound IL6R and IL6ST stimulates 'classic signaling', whereas the binding of IL6 and soluble IL6R to IL6ST stimulates 'trans-signaling'. Alternatively, 'cluster signaling' occurs when membrane-bound IL6:IL6R complexes on transmitter cells activate IL6ST receptors on neighboring receiver cells. IL6 is a potent inducer of the acute phase response. Rapid production of IL6 contributes to host defense during infection and tissue injury, but excessive IL6 synthesis is involved in disease pathology. In the innate immune response, is synthesized by myeloid cells, such as macrophages and dendritic cells, upon recognition of pathogens through toll-like receptors (TLRs) at the site of infection or tissue injury. In the adaptive immune response, is required for the differentiation of B cells into immunoglobulin-secreting cells. Plays a major role in the differentiation of CD4(+) T cell subsets. Essential factor for the development of T follicular helper (Tfh) cells that are required for the induction of germinal-center formation. Required to drive naive CD4(+) T cells to the Th17 lineage. Also required for proliferation of myeloma cells and the survival of plasmablast cells. Functionally, acts as an essential factor in bone homeostasis and on vessels directly or indirectly by induction of VEGF, resulting in increased angiogenesis activity and vascular permeability. Induces, through 'trans-signaling' and synergistically with IL1B and TNF, the production of VEGF. Involved in metabolic controls, is discharged into the bloodstream after muscle contraction increasing lipolysis and improving insulin resistance. 'Trans-signaling' in central nervous system also regulates energy and glucose homeostasis. Mediates, through GLP-1, crosstalk between insulin-sensitive tissues, intestinal L cells and pancreatic islets to adapt to changes in insulin demand. Also acts as a myokine. Plays a protective role during liver injury, being required for maintenance of tissue regeneration. Also has a pivotal role in iron metabolism by regulating HAMP/hepcidin expression upon inflammation or bacterial infection. Through activation of IL6ST-YAP-NOTCH pathway, induces inflammation-induced epithelial regeneration. This Orcinus orca (Killer whale) protein is Interleukin-6 (IL6).